A 199-amino-acid chain; its full sequence is Hematopoietic prostaglandin D synthase (199 aa).

Residues 2 to 79 (PNYKLLYFNM…YLTKNTDLAG (78 aa)) enclose the GST N-terminal domain. Glutathione is bound by residues Tyr8, Arg14, Trp39, 49–51 (GKI), and 63–64 (QS). One can recognise a GST C-terminal domain in the interval 81–199 (TELEQCQVDA…WILKRPQTKL (119 aa)).

The protein belongs to the GST superfamily. Sigma family. As to quaternary structure, homodimer. It depends on glutathione as a cofactor. In terms of tissue distribution, highly expressed in spleen and bone marrow. Lower levels of expression in small intestine, colon, liver, pancreas and skin. Not detected in brain, heart, lung or kidney (at protein level).

Its subcellular location is the cytoplasm. It carries out the reaction prostaglandin H2 = prostaglandin D2. The enzyme catalyses RX + glutathione = an S-substituted glutathione + a halide anion + H(+). It catalyses the reaction 2-glyceryl-prostaglandin H2 = 2-glyceryl-prostaglandin D2. Functionally, bifunctional enzyme which catalyzes both the conversion of PGH2 to PGD2, a prostaglandin involved in smooth muscle contraction/relaxation and a potent inhibitor of platelet aggregation, and the conjugation of glutathione with a wide range of aryl halides and organic isothiocyanates. Also exhibits low glutathione-peroxidase activity towards cumene hydroperoxide. This chain is Hematopoietic prostaglandin D synthase, found in Rattus norvegicus (Rat).